Here is a 358-residue protein sequence, read N- to C-terminus: Endoplasmic reticulum junction formation protein lunapark-B (358 aa).

At Met-1–Arg-45 the chain is on the cytoplasmic side. A coiled-coil region spans residues Lys-9–Leu-41. A helical membrane pass occupies residues Leu-46–Leu-66. At Pro-67–Gln-69 the chain is on the lumenal side. Residues Trp-70–Ile-90 form a helical membrane-spanning segment. At Arg-91 to Ala-358 the chain is on the cytoplasmic side. Positions Ser-99–Thr-128 form a coiled coil. A C4-type; plays a role in ER morphology zinc finger spans residues Cys-275–Cys-300. The segment at Asn-320 to Ala-358 is disordered.

Belongs to the lunapark family. Homodimer; homodimerization requires the C4-type zinc finger motif and decreases during mitosis in a phosphorylation-dependent manner. Post-translationally, phosphorylated. Phosphorylation occurs during interphase. Phosphorylation also occurs during mitosis; these phosphorylations reduce both its homodimerization and the ER three-way tubular junction formation.

The protein resides in the endoplasmic reticulum membrane. In terms of biological role, endoplasmic reticulum (ER)-shaping membrane protein that plays a role in determining ER morphology. Involved in the stabilization of nascent three-way ER tubular junctions within the ER network. May also play a role as a curvature-stabilizing protein within three-way ER tubular junction network. This Takifugu rubripes (Japanese pufferfish) protein is Endoplasmic reticulum junction formation protein lunapark-B (lnpkb).